Consider the following 216-residue polypeptide: ATP-dependent Clp protease proteolytic subunit (216 aa).

S120 functions as the Nucleophile in the catalytic mechanism. The active site involves H145.

It belongs to the peptidase S14 family. Fourteen ClpP subunits assemble into 2 heptameric rings which stack back to back to give a disk-like structure with a central cavity, resembling the structure of eukaryotic proteasomes.

Its subcellular location is the cytoplasm. It carries out the reaction Hydrolysis of proteins to small peptides in the presence of ATP and magnesium. alpha-casein is the usual test substrate. In the absence of ATP, only oligopeptides shorter than five residues are hydrolyzed (such as succinyl-Leu-Tyr-|-NHMec, and Leu-Tyr-Leu-|-Tyr-Trp, in which cleavage of the -Tyr-|-Leu- and -Tyr-|-Trp bonds also occurs).. Functionally, cleaves peptides in various proteins in a process that requires ATP hydrolysis. Has a chymotrypsin-like activity. Plays a major role in the degradation of misfolded proteins. In Cupriavidus metallidurans (strain ATCC 43123 / DSM 2839 / NBRC 102507 / CH34) (Ralstonia metallidurans), this protein is ATP-dependent Clp protease proteolytic subunit.